A 173-amino-acid polypeptide reads, in one-letter code: Small ribosomal subunit protein uS5 (173 aa).

Positions 17-80 constitute an S5 DRBM domain; sequence LREKMIAVNR…EESRRNMIKV (64 aa).

It belongs to the universal ribosomal protein uS5 family. In terms of assembly, part of the 30S ribosomal subunit. Contacts proteins S4 and S8.

Functionally, with S4 and S12 plays an important role in translational accuracy. Its function is as follows. Located at the back of the 30S subunit body where it stabilizes the conformation of the head with respect to the body. The protein is Small ribosomal subunit protein uS5 of Delftia acidovorans (strain DSM 14801 / SPH-1).